Here is a 283-residue protein sequence, read N- to C-terminus: Gap junction beta-1 protein (283 aa).

Residues 1 to 22 (MNWTGLYTLLSGVNRHSTAIGR) are Cytoplasmic-facing. A helical membrane pass occupies residues 23-45 (VWLSVIFIFRIMVLVVAAESVWG). Over 46–75 (DEKSSFICNTLQPGCNSVCYDHFFPISHVR) the chain is Extracellular. The helical transmembrane segment at 76 to 95 (LWSLQLILVSTPALLVAMHV) threads the bilayer. Residues 96-130 (AHQQHIEKKMLRLEGHGDPLHLEEVKRHKVHISGT) lie on the Cytoplasmic side of the membrane. A helical membrane pass occupies residues 131-153 (LWWTYVISVVFRLLFEAVFMYVF). Residues 154-191 (YLLYPGYAMVRLVKCEAFPCPNTVDCFVSRPTEKTVFT) lie on the Extracellular side of the membrane. The chain crosses the membrane as a helical span at residues 192-214 (VFMLAASGICIILNVAEVVYLII). Residues 215–283 (RACARRAQRR…AEKSDRCSAC (69 aa)) lie on the Cytoplasmic side of the membrane. 4 positions are modified to phosphoserine: serine 233, serine 258, serine 266, and serine 277.

This sequence belongs to the connexin family. Beta-type (group I) subfamily. As to quaternary structure, a connexon is composed of a hexamer of connexins. Interacts with CNST.

It is found in the cell membrane. The protein resides in the cell junction. The protein localises to the gap junction. Its function is as follows. One gap junction consists of a cluster of closely packed pairs of transmembrane channels, the connexons, through which materials of low MW diffuse from one cell to a neighboring cell. The protein is Gap junction beta-1 protein (Gjb1) of Mus musculus (Mouse).